The following is a 424-amino-acid chain: Protein pellino (424 aa).

Residues 1 to 21 (MVKRTDGTESPILAEDGGDGH) are disordered. The residue at position 10 (Ser10) is a Phosphoserine.

This sequence belongs to the pellino family. In terms of assembly, interacts with pll.

Its function is as follows. Scaffold protein involved in the Toll signaling pathway via its interaction with pelle/pll kinase. This chain is Protein pellino (Pli), found in Drosophila melanogaster (Fruit fly).